The chain runs to 214 residues: Adenylate kinase (214 aa).

10–15 (GAGKGT) serves as a coordination point for ATP. An NMP region spans residues 30 to 59 (ATGDVLRAAVKEGTPLGLEAKAAMDRGDLV). AMP contacts are provided by residues T31, R36, 57 to 59 (DLV), and Q92. Positions 126 to 161 (GRTTCEACQRPFFGRQPGETCTEGGVSGTLVRRKDD) are LID. R127 lines the ATP pocket. Residues R158 and R169 each coordinate AMP. Residue G198 participates in ATP binding.

It belongs to the adenylate kinase family. Monomer.

Its subcellular location is the cytoplasm. The enzyme catalyses AMP + ATP = 2 ADP. The protein operates within purine metabolism; AMP biosynthesis via salvage pathway; AMP from ADP: step 1/1. Its function is as follows. Catalyzes the reversible transfer of the terminal phosphate group between ATP and AMP. Plays an important role in cellular energy homeostasis and in adenine nucleotide metabolism. The protein is Adenylate kinase of Gemmatimonas aurantiaca (strain DSM 14586 / JCM 11422 / NBRC 100505 / T-27).